A 101-amino-acid polypeptide reads, in one-letter code: Small ribosomal subunit protein uS14 (101 aa).

This sequence belongs to the universal ribosomal protein uS14 family. As to quaternary structure, part of the 30S ribosomal subunit. Contacts proteins S3 and S10.

Functionally, binds 16S rRNA, required for the assembly of 30S particles and may also be responsible for determining the conformation of the 16S rRNA at the A site. The polypeptide is Small ribosomal subunit protein uS14 (Methylorubrum populi (strain ATCC BAA-705 / NCIMB 13946 / BJ001) (Methylobacterium populi)).